A 479-amino-acid polypeptide reads, in one-letter code: UDP-N-acetylmuramate--L-alanine ligase (479 aa).

An ATP-binding site is contributed by 126–132 (GTHGKTT).

This sequence belongs to the MurCDEF family.

It localises to the cytoplasm. The catalysed reaction is UDP-N-acetyl-alpha-D-muramate + L-alanine + ATP = UDP-N-acetyl-alpha-D-muramoyl-L-alanine + ADP + phosphate + H(+). Its pathway is cell wall biogenesis; peptidoglycan biosynthesis. Functionally, cell wall formation. The chain is UDP-N-acetylmuramate--L-alanine ligase from Alkalilimnicola ehrlichii (strain ATCC BAA-1101 / DSM 17681 / MLHE-1).